Consider the following 303-residue polypeptide: Quinolinate synthase (303 aa).

Residues histidine 24 and serine 41 each contribute to the iminosuccinate site. Cysteine 86 provides a ligand contact to [4Fe-4S] cluster. Iminosuccinate contacts are provided by residues 112 to 114 (YVN) and serine 129. A [4Fe-4S] cluster-binding site is contributed by cysteine 172. Iminosuccinate contacts are provided by residues 198–200 (HPE) and threonine 215. Cysteine 260 is a [4Fe-4S] cluster binding site.

This sequence belongs to the quinolinate synthase family. Type 2 subfamily. Requires [4Fe-4S] cluster as cofactor.

The protein localises to the cytoplasm. It carries out the reaction iminosuccinate + dihydroxyacetone phosphate = quinolinate + phosphate + 2 H2O + H(+). Its pathway is cofactor biosynthesis; NAD(+) biosynthesis; quinolinate from iminoaspartate: step 1/1. Functionally, catalyzes the condensation of iminoaspartate with dihydroxyacetone phosphate to form quinolinate. In Clostridium kluyveri (strain NBRC 12016), this protein is Quinolinate synthase.